Consider the following 56-residue polypeptide: MVQNDFLDSYDVTMLLQDDNGKQYYEYHKGLSLSDFEVLYGNTVDEIIKLRVDKIS.

The protein belongs to the phi29likevirus protein p56 family. Homodimer. Interacts with host UDG; this interaction inhibits the uracil-DNA glycosylase.

Functionally, inhibits the host uracil-DNA glycosylase (UDG), an enzyme which removes uracil residues from DNA by the base excision repair. Interacts with host uracil-DNA glycosylase and prevents the latter from binding to DNA. Since the viral DNA polymerase efficiently incorporates dUMP into DNA, the virus needs to prevent the deleterious effect caused by host UDG when it eliminates uracil residues present in the viral genome. The protein is Protein p56 (1B) of Bacillus phage PZA (Bacteriophage PZA).